A 132-amino-acid chain; its full sequence is MALQIKIVAPNKVVFDDQVDEVVLPSVSGQLGILTNHAPLITGLSNGVMRVRKQGTFIPIAVLTGVAEVDNNEVSVVAMAAELGSGIDVDRARAALARAEQTLATSQNKTELLQAQTALERANARLRAAGAL.

It belongs to the ATPase epsilon chain family. In terms of assembly, F-type ATPases have 2 components, CF(1) - the catalytic core - and CF(0) - the membrane proton channel. CF(1) has five subunits: alpha(3), beta(3), gamma(1), delta(1), epsilon(1). CF(0) has three main subunits: a, b and c.

It is found in the cell inner membrane. Its function is as follows. Produces ATP from ADP in the presence of a proton gradient across the membrane. The polypeptide is ATP synthase epsilon chain (Gloeobacter violaceus (strain ATCC 29082 / PCC 7421)).